The following is a 179-amino-acid chain: Gamma-crystallin S (179 aa).

The residue at position 2 (serine 2) is an N-acetylserine. Positions 2 to 5 (SKTG) are N-terminal arm. Beta/gamma crystallin 'Greek key' domains lie at 6 to 44 (TKITFYEDKNFQGRRYDCDCDCSDFHTYLSRCNSIRVEG) and 45 to 87 (GTWA…RALH). Positions 88–93 (LSSGGQ) are connecting peptide. Beta/gamma crystallin 'Greek key' domains follow at residues 94–134 (YKIQ…KVLD) and 135–177 (GAWI…RRIV).

Belongs to the beta/gamma-crystallin family. In terms of assembly, monomer.

Crystallins are the dominant structural components of the vertebrate eye lens. This is Gamma-crystallin S (CRYGS) from Oryctolagus cuniculus (Rabbit).